The sequence spans 197 residues: Probable GTP-binding protein EngB (197 aa).

Residues 22–195 form the EngB-type G domain; it reads NLPEIAFVGR…VDYLFDDLVE (174 aa). GTP is bound by residues 30–37, 57–61, 75–78, 142–145, and 174–176; these read GRSNVGKS, GKTRL, DLPG, TKSD, and FSS. The Mg(2+) site is built by serine 37 and threonine 59.

This sequence belongs to the TRAFAC class TrmE-Era-EngA-EngB-Septin-like GTPase superfamily. EngB GTPase family. Mg(2+) is required as a cofactor.

Its function is as follows. Necessary for normal cell division and for the maintenance of normal septation. In Clostridium perfringens (strain 13 / Type A), this protein is Probable GTP-binding protein EngB.